The following is a 187-amino-acid chain: UPF0340 protein SP_0663 (187 aa).

This sequence belongs to the UPF0340 family.

This is UPF0340 protein SP_0663 from Streptococcus pneumoniae serotype 4 (strain ATCC BAA-334 / TIGR4).